The primary structure comprises 1757 residues: E3 ubiquitin-protein ligase UBR1 (1757 aa).

A disordered region spans residues 1–24 (MADEEMDGAERMDVSPEPPLAPQR). An N-acetylalanine modification is found at A2. The UBR-type zinc finger occupies 97-168 (QLCGKVFKSG…TGPFCVDHEP (72 aa)). Residues C99, C112, C115, C124, C127, H133, and H136 each coordinate Zn(2+). F148 is an a peptide binding site. Position 149 (C149) interacts with Zn(2+). D150 contacts a peptide. C151 is a binding site for Zn(2+). D153 is an a peptide binding site. C163 and H166 together coordinate Zn(2+). A disordered region spans residues 842–868 (QHSKAEHMQKKRRKQENKDEALPPPPP). The tract at residues 1022–1057 (RKRKAEAARLHRQKIMAQMSALQKNFIETHKLMYDN) is UBC2-binding region (U2BR). Zn(2+) contacts are provided by C1101, C1104, C1162, H1164, H1167, and C1170. The RING-type; atypical zinc-finger motif lies at 1101-1204 (CILCQEEQEV…SGEYLCPLCK (104 aa)). S1182 carries the phosphoserine modification. C1200, C1203, C1635, C1638, and C1661 together coordinate Zn(2+).

Belongs to the E3 ubiquitin-protein ligase UBR1-like family. In terms of assembly, interacts with RECQL4. As to expression, present in skeletal muscle and liver (at protein level). Broadly expressed, with highest levels in skeletal muscle and heart. Expressed in acinar cells of the pancreas. In testes, expressed primarily in spermatogonia.

The protein resides in the cytoplasm. The protein localises to the cytosol. The enzyme catalyses S-ubiquitinyl-[E2 ubiquitin-conjugating enzyme]-L-cysteine + [acceptor protein]-L-lysine = [E2 ubiquitin-conjugating enzyme]-L-cysteine + N(6)-ubiquitinyl-[acceptor protein]-L-lysine.. It participates in protein modification; protein ubiquitination. Functionally, E3 ubiquitin-protein ligase which is a component of the N-end rule pathway. Recognizes and binds proteins bearing specific N-terminal residues (N-degrons) that are destabilizing according to the N-end rule, leading to their ubiquitination and subsequent degradation. Recognizes both type-1 and type-2 N-degrons, containing positively charged amino acids (Arg, Lys and His) and bulky and hydrophobic amino acids, respectively. Does not ubiquitinate proteins that are acetylated at the N-terminus. In contrast, it strongly binds methylated N-degrons. Binds leucine and is a negative regulator of the leucine-mTOR signaling pathway, thereby controlling cell growth. The protein is E3 ubiquitin-protein ligase UBR1 of Mus musculus (Mouse).